We begin with the raw amino-acid sequence, 273 residues long: Thiazole synthase (273 aa).

The active-site Schiff-base intermediate with DXP is Lys-111. Residues Gly-172, 198–199, and 220–221 contribute to the 1-deoxy-D-xylulose 5-phosphate site; these read AG and NS. A disordered region spans residues 251 to 273; the sequence is RLPRRGQASASSPTTGLISGKDK. Residues 258 to 267 show a composition bias toward polar residues; the sequence is ASASSPTTGL.

The protein belongs to the ThiG family. In terms of assembly, homotetramer. Forms heterodimers with either ThiH or ThiS.

It localises to the cytoplasm. It carries out the reaction [ThiS sulfur-carrier protein]-C-terminal-Gly-aminoethanethioate + 2-iminoacetate + 1-deoxy-D-xylulose 5-phosphate = [ThiS sulfur-carrier protein]-C-terminal Gly-Gly + 2-[(2R,5Z)-2-carboxy-4-methylthiazol-5(2H)-ylidene]ethyl phosphate + 2 H2O + H(+). The protein operates within cofactor biosynthesis; thiamine diphosphate biosynthesis. Functionally, catalyzes the rearrangement of 1-deoxy-D-xylulose 5-phosphate (DXP) to produce the thiazole phosphate moiety of thiamine. Sulfur is provided by the thiocarboxylate moiety of the carrier protein ThiS. In vitro, sulfur can be provided by H(2)S. The chain is Thiazole synthase from Synechococcus sp. (strain CC9902).